The following is a 264-amino-acid chain: 3-methyl-2-oxobutanoate hydroxymethyltransferase (264 aa).

Mg(2+) is bound by residues D45 and D84. 3-methyl-2-oxobutanoate-binding positions include 45 to 46 (DS), D84, and K112. A Mg(2+)-binding site is contributed by E114. The active-site Proton acceptor is E181.

Belongs to the PanB family. Homodecamer; pentamer of dimers. Mg(2+) is required as a cofactor.

The protein resides in the cytoplasm. The enzyme catalyses 3-methyl-2-oxobutanoate + (6R)-5,10-methylene-5,6,7,8-tetrahydrofolate + H2O = 2-dehydropantoate + (6S)-5,6,7,8-tetrahydrofolate. Its pathway is cofactor biosynthesis; (R)-pantothenate biosynthesis; (R)-pantoate from 3-methyl-2-oxobutanoate: step 1/2. In terms of biological role, catalyzes the reversible reaction in which hydroxymethyl group from 5,10-methylenetetrahydrofolate is transferred onto alpha-ketoisovalerate to form ketopantoate. The protein is 3-methyl-2-oxobutanoate hydroxymethyltransferase of Shigella boydii serotype 18 (strain CDC 3083-94 / BS512).